Consider the following 466-residue polypeptide: Uronate isomerase (466 aa).

The protein belongs to the metallo-dependent hydrolases superfamily. Uronate isomerase family.

It carries out the reaction D-glucuronate = D-fructuronate. The enzyme catalyses aldehydo-D-galacturonate = keto-D-tagaturonate. It functions in the pathway carbohydrate metabolism; pentose and glucuronate interconversion. In Caldanaerobacter subterraneus subsp. tengcongensis (strain DSM 15242 / JCM 11007 / NBRC 100824 / MB4) (Thermoanaerobacter tengcongensis), this protein is Uronate isomerase.